Reading from the N-terminus, the 477-residue chain is Glycogen synthase (477 aa).

K15 is an ADP-alpha-D-glucose binding site.

This sequence belongs to the glycosyltransferase 1 family. Bacterial/plant glycogen synthase subfamily.

The catalysed reaction is [(1-&gt;4)-alpha-D-glucosyl](n) + ADP-alpha-D-glucose = [(1-&gt;4)-alpha-D-glucosyl](n+1) + ADP + H(+). The protein operates within glycan biosynthesis; glycogen biosynthesis. Its function is as follows. Synthesizes alpha-1,4-glucan chains using ADP-glucose. This Salmonella typhi protein is Glycogen synthase.